Here is a 545-residue protein sequence, read N- to C-terminus: T-complex protein 1 subunit gamma (545 aa).

N-acetylmethionine is present on Met-1. The disordered stretch occupies residues 1 to 24 (MMGHRPVLVLSQNTKRESGRKVQS). Ser-11 bears the Phosphoserine mark. A Glycyl lysine isopeptide (Lys-Gly) (interchain with G-Cter in SUMO2) cross-link involves residue Lys-15. Gly-42 provides a ligand contact to ADP. Residue Gly-42 coordinates ATP. Residue Asp-93 coordinates Mg(2+). Residues Gly-94, Thr-95, Thr-96, Ser-97, Thr-162, and Lys-163 each contribute to the ADP site. Residues Gly-94, Thr-95, and Thr-96 each coordinate ATP. Ser-170 bears the Phosphoserine mark. Lys-222 is modified (N6-acetyllysine). 2 positions are modified to phosphoserine: Ser-243 and Ser-244. Position 247 is a phosphotyrosine (Tyr-247). Residues Lys-248 and Lys-249 each participate in a glycyl lysine isopeptide (Lys-Gly) (interchain with G-Cter in SUMO2) cross-link. A Phosphoserine modification is found at Ser-252. Cys-366 and Cys-372 are disulfide-bonded. A Glycyl lysine isopeptide (Lys-Gly) (interchain with G-Cter in SUMO2) cross-link involves residue Lys-381. Gly-411 lines the ADP pocket. Residue Gly-411 coordinates ATP. Phosphothreonine occurs at positions 430 and 459. ADP is bound by residues Gly-482, Glu-483, Glu-497, and Lys-502. Gly-482 is an ATP binding site. An ATP-binding site is contributed by Glu-497. The interval 526-545 (HKKKGDDQSRQGGAPDAGQE) is disordered.

This sequence belongs to the TCP-1 chaperonin family. In terms of assembly, component of the chaperonin-containing T-complex (TRiC), a hexadecamer composed of two identical back-to-back stacked rings enclosing a protein folding chamber. Each ring is made up of eight different subunits: TCP1/CCT1, CCT2, CCT3, CCT4, CCT5, CCT6A/CCT6, CCT7, CCT8. Interacts with PACRG. Interacts with DNAAF4. Interacts with DLEC1.

It localises to the cytoplasm. It catalyses the reaction ATP + H2O = ADP + phosphate + H(+). In terms of biological role, component of the chaperonin-containing T-complex (TRiC), a molecular chaperone complex that assists the folding of actin, tubulin and other proteins upon ATP hydrolysis. The TRiC complex mediates the folding of WRAP53/TCAB1, thereby regulating telomere maintenance. As part of the TRiC complex may play a role in the assembly of BBSome, a complex involved in ciliogenesis regulating transports vesicles to the cilia. The sequence is that of T-complex protein 1 subunit gamma (CCT3) from Bos taurus (Bovine).